Reading from the N-terminus, the 269-residue chain is Replication protein A 32 kDa subunit (269 aa).

Residues 1–22 (MSNRVQGGFDNNSGNNQSAQKQ) are compositionally biased toward polar residues. Residues 1-25 (MSNRVQGGFDNNSGNNQSAQKQQAE) form a disordered region. Positions 69-149 (ITAKFEFLQS…AQIQLLYFSI (81 aa)) form a DNA-binding region, OB.

This sequence belongs to the replication factor A protein 2 family. In terms of assembly, component of the replication protein A complex (RPA), a heterotrimeric complex composed of RPA1, RPA2/TEB2 and RPA3/TEB3. Component of the telomerase holoenzyme complex, composed of the catalytic core (the catalytic subunit TERT, the telomerase RNA template component TER and TAP65/p65), which is associated with two heterotrimeric subcomplexes: (i) the replication protein A (RPA)-related subcomplex, composed of TEB1, RPA2/TEB2 and RPA3/TEB3 and (ii) the CST-like subcomplex, composed of TAP75/p75, TAP45/p45 and TAP19/p19. TEB1 and the CST-like subcomplex are tethered to the catalytic core by TAP50/p50.

The protein localises to the nucleus. The protein resides in the chromosome. It is found in the telomere. Its function is as follows. Component of the heterotrimeric replication protein A (RPA) and holoenzyme telomerase ribonucleoprotein complexes. As part of the RPA complex, binds and stabilizes single-stranded DNA (ssDNA) intermediates, that form during DNA replication or upon DNA stress. It prevents their reannealing and in parallel, recruits and activates different proteins and complexes involved in DNA metabolism. Thereby, it plays an essential role both in DNA replication and the cellular response to DNA damage. In the cellular response to DNA damage, the RPA complex controls DNA repair and DNA damage checkpoint activation. Also part of a subcomplex of the holoenzyme telomerase ribonucleoprotein complex: this subcomplex that contains TEB1, RPA2/TEB2, RPA3/TEB3, but not RPA1, mediates the recruitment of telomerase to telomeric DNA via specific interaction between TEB1 and telomeric ssDNA. In the holoenzyme telomerase ribonucleoprotein complex, RPA2/TEB2 and RPA3/TEB3 act as assembly factors for TEB1 incorporation into telomerase holoenzyme. In the holoenzyme telomerase ribonucleoprotein complex, RPA2/TEB2 does not contribute to ssDNA affinity, while it contributes to ssDNA affinity in the RPA complex. The polypeptide is Replication protein A 32 kDa subunit (RPA2) (Tetrahymena thermophila (strain SB210)).